The sequence spans 181 residues: Ion-translocating oxidoreductase complex subunit B (181 aa).

Residues 1–26 (MLEAVSAVMSLGGMALFAGLGLGYAA) form a hydrophobic region. The region spanning 32–90 (EADPVVEKLEALLPATNCGMCGHPGCGPYAQAITEGEAINLCTPGGKAVMESIAAMLGV) is the 4Fe-4S domain. [4Fe-4S] cluster-binding residues include C49, C52, C57, C73, C110, C113, C116, C120, C140, C143, C146, and C150. 2 consecutive 4Fe-4S ferredoxin-type domains span residues 101–130 (KVAY…GANK) and 131–160 (QSHT…MQPV).

It belongs to the 4Fe4S bacterial-type ferredoxin family. RnfB subfamily. As to quaternary structure, the complex is composed of six subunits: RnfA, RnfB, RnfC, RnfD, RnfE and RnfG. Requires [4Fe-4S] cluster as cofactor.

It is found in the cell inner membrane. In terms of biological role, part of a membrane-bound complex that couples electron transfer with translocation of ions across the membrane. The sequence is that of Ion-translocating oxidoreductase complex subunit B from Magnetococcus marinus (strain ATCC BAA-1437 / JCM 17883 / MC-1).